Here is a 168-residue protein sequence, read N- to C-terminus: Disulfide bond formation protein B 2 (168 aa).

The Cytoplasmic portion of the chain corresponds to 1–9; it reads MLPARLRTF. Residues 10–26 form a helical membrane-spanning segment; it reads FLPACLVALAVLVASFR. The Periplasmic segment spans residues 27 to 44; the sequence is LENTVGLMPCPLCLSQRL. A disulfide bridge links cysteine 36 with cysteine 39. Residues 45-61 form a helical membrane-spanning segment; it reads LLGGYALLCFAAVLQAP. Over 62–67 the chain is Cytoplasmic; the sequence is GTRGIL. The helical transmembrane segment at 68 to 85 threads the bilayer; sequence RYARLALGCSLAGALLAA. Residues 86 to 140 are Periplasmic-facing; that stretch reads RHVWLQGAEGVNEVCPVPIGRVFEQSWSEAARQLLLGGPDCRSLAWSFLDLTLPE. Cysteines 100 and 126 form a disulfide. Residues 141–159 traverse the membrane as a helical segment; the sequence is WSLLAFLLLAVLPLSCLLA. The Cytoplasmic portion of the chain corresponds to 160–168; the sequence is YRFRTLART.

It belongs to the DsbB family.

Its subcellular location is the cell inner membrane. In terms of biological role, required for disulfide bond formation in some periplasmic proteins. Acts by oxidizing the DsbA protein. This is Disulfide bond formation protein B 2 (dsbB2) from Pseudomonas putida (strain ATCC 47054 / DSM 6125 / CFBP 8728 / NCIMB 11950 / KT2440).